A 214-amino-acid polypeptide reads, in one-letter code: Isochorismatase family protein 2B (214 aa).

Belongs to the isochorismatase family.

This chain is Isochorismatase family protein 2B, found in Dictyostelium discoideum (Social amoeba).